A 791-amino-acid polypeptide reads, in one-letter code: Metabotropic glutamate receptor-like protein D (791 aa).

The signal sequence occupies residues 1-22 (MKINSFLIILILLFISIKNSNG). The Extracellular portion of the chain corresponds to 23–390 (EPEKKFKLIT…TEVYQSRPIQ (368 aa)). Asparagine 72, asparagine 168, asparagine 279, asparagine 290, asparagine 306, and asparagine 349 each carry an N-linked (GlcNAc...) asparagine glycan. A helical transmembrane segment spans residues 391–411 (IAISSISSFFIVTVLVMMGLV). The Cytoplasmic segment spans residues 412–424 (VRFRKNPSIRSAS). A helical transmembrane segment spans residues 425–445 (PIFLNFILFGALIIYVGIIIW). Over 446–453 (SSSINSAS) the chain is Extracellular. A helical transmembrane segment spans residues 454-474 (CNAQFWLVTLGFTTLIGSLVV). The Cytoplasmic portion of the chain corresponds to 475–495 (KNVRIWLIFDNPELKLVKITN). A helical membrane pass occupies residues 496-516 (LQLVPWVGVCLVINIILMSIL). The Extracellular segment spans residues 517-550 (TSVGDLREVNAQGIDSLGKYEFMRICKMNSSGAS). Asparagine 545 carries an N-linked (GlcNAc...) asparagine glycan. The chain crosses the membrane as a helical span at residues 551-571 (TLYTILAYFAALLLIGVFVSW). Residues 572–585 (KIRIVDILEFNESK) lie on the Cytoplasmic side of the membrane. A helical membrane pass occupies residues 586–606 (AIANTLYAISFCLFVIVPLMI). Residues 607 to 615 (SPQDKQSEK) lie on the Extracellular side of the membrane. Residues 616-636 (IILCIAGLFIVTAAVLIIFVP) form a helical membrane-spanning segment. Over 637-791 (KFYRVYIFGS…KNEENNDGDN (155 aa)) the chain is Cytoplasmic. Disordered stretches follow at residues 664–715 (TARA…SEPN) and 746–791 (IITE…DGDN). Residues 674–689 (SSGGGAGSGGATGGSG) are compositionally biased toward gly residues. The segment covering 749–760 (ENGQDSNNNNNN) has biased composition (low complexity). A coiled-coil region spans residues 752 to 781 (QDSNNNNNNEENKDNNIENNKISEEIKENL). The span at 761–785 (EENKDNNIENNKISEEIKENLKNEE) shows a compositional bias: basic and acidic residues.

In the N-terminal section; belongs to the BMP lipoprotein family. It in the C-terminal section; belongs to the G-protein coupled receptor 3 family. GABA-B receptor subfamily.

It localises to the membrane. The protein is Metabotropic glutamate receptor-like protein D (grlD) of Dictyostelium discoideum (Social amoeba).